A 315-amino-acid chain; its full sequence is Methionyl-tRNA formyltransferase (315 aa).

Position 113–116 (113–116 (SILP)) interacts with (6S)-5,6,7,8-tetrahydrofolate.

Belongs to the Fmt family.

It catalyses the reaction L-methionyl-tRNA(fMet) + (6R)-10-formyltetrahydrofolate = N-formyl-L-methionyl-tRNA(fMet) + (6S)-5,6,7,8-tetrahydrofolate + H(+). Its function is as follows. Attaches a formyl group to the free amino group of methionyl-tRNA(fMet). The formyl group appears to play a dual role in the initiator identity of N-formylmethionyl-tRNA by promoting its recognition by IF2 and preventing the misappropriation of this tRNA by the elongation apparatus. The polypeptide is Methionyl-tRNA formyltransferase (Vibrio vulnificus (strain CMCP6)).